Reading from the N-terminus, the 135-residue chain is Large ribosomal subunit protein bL21 (135 aa).

The tract at residues Tyr85–Ala135 is disordered. The span at Gln93 to Gly107 shows a compositional bias: polar residues. The span at Ser111 to Ala135 shows a compositional bias: acidic residues.

This sequence belongs to the bacterial ribosomal protein bL21 family. As to quaternary structure, part of the 50S ribosomal subunit. Contacts protein L20.

This protein binds to 23S rRNA in the presence of protein L20. The sequence is that of Large ribosomal subunit protein bL21 from Salinibacter ruber (strain DSM 13855 / M31).